The primary structure comprises 35 residues: Conotoxin M11.2 (35 aa).

4 cysteine pairs are disulfide-bonded: Cys2–Cys16, Cys9–Cys21, Cys15–Cys26, and Cys20–Cys33.

It belongs to the conotoxin I1 superfamily. As to expression, expressed by the venom duct.

It localises to the secreted. In Conus magus (Magical cone), this protein is Conotoxin M11.2.